A 490-amino-acid polypeptide reads, in one-letter code: Cardiolipin synthase A (490 aa).

Transmembrane regions (helical) follow at residues 20 to 40 and 49 to 69; these read LGLL…HAVL and IAWA…YLVF. PLD phosphodiesterase domains follow at residues 229–256 and 403–430; these read VNFR…GVEY and QPGF…DNRS. Catalysis depends on residues histidine 234, lysine 236, aspartate 241, histidine 408, lysine 410, and aspartate 415.

The protein belongs to the phospholipase D family. Cardiolipin synthase subfamily. ClsA sub-subfamily.

The protein localises to the cell inner membrane. The catalysed reaction is 2 a 1,2-diacyl-sn-glycero-3-phospho-(1'-sn-glycerol) = a cardiolipin + glycerol. Functionally, catalyzes the reversible phosphatidyl group transfer from one phosphatidylglycerol molecule to another to form cardiolipin (CL) (diphosphatidylglycerol) and glycerol. The polypeptide is Cardiolipin synthase A (Pseudomonas aeruginosa (strain LESB58)).